We begin with the raw amino-acid sequence, 172 residues long: Putative phosphoesterase BCAH820_1309 (172 aa).

The active-site Proton donor is H34. 2 consecutive short sequence motifs (HXTX) follow at residues 34 to 37 (HITL) and 115 to 118 (HLTI). H115 (proton acceptor) is an active-site residue.

This sequence belongs to the 2H phosphoesterase superfamily. YjcG family.

This is Putative phosphoesterase BCAH820_1309 from Bacillus cereus (strain AH820).